The primary structure comprises 209 residues: Ras-like GTP-binding protein RYL2 (209 aa).

12–19 (GAQGVGKT) is a GTP binding site. An Effector region motif is present at residues 34–42 (QASTIGASF). Residues 60–64 (DTAGQ) and 118–121 (TKVD) contribute to the GTP site. Residues C208 and C209 are each lipidated (S-geranylgeranyl cysteine).

It belongs to the small GTPase superfamily. Rab family.

The protein resides in the cell membrane. Protein transport. Probably involved in vesicular traffic. The chain is Ras-like GTP-binding protein RYL2 (RYL2) from Yarrowia lipolytica (strain CLIB 122 / E 150) (Yeast).